Consider the following 785-residue polypeptide: MNEKSLRVLEFNKIKDELKKYTQTSAAKDLIERLHPYESAYEVREHLMETEEAFKISIKKGDAPFSGLYDIREAISKAQRRFTLFPSELLRVANLLRASRRFKGYVKSDDLSEKYEVLESITEGLVPLNGLEEEISKCIIGEEEISDRASTTLFNIRRSLKDKTSSIKARVNSLIRTYSSHLQENIYTVRGERYVLPVKVEHKGAVPGLVHDQSASGATLFIEPMSLVDLNNEIKELRLKEKAEIDRILAFLSGKVYENVDVIKVDADILWELDFIFAKAKYAQKLGAIMPIISEDGHFNIINAKHPLIDPKKVVENNIYLRDGITSVVITGPNTGGKTVTLKTVGLLHIMAMSGLMITASQGSTISFFKEVFADIGDEQSIEQSLSTFSSHMTNIVNIIDSADENSLVLFDELGAGTDPTEGAALAVSILENLRKRKTKVIATTHYSELKAYALKVDNVENASVEFDVETLRPTYRLLIGVPGKSNAFEISKRLGLPDYIIEDAREGISEETLKFEDLIQSLQHKNIKAQEHARKAESAKEEAVKLKEKYESKLDKFQDIREKAILNAQKEAKEIIKEAKEEADKILKDIRELERMGYSSDVRKLLEENRKKLKDKLEKTESKLNQPKEVGEAVTNVSEGDELYLPKFETKVMVLTNPDNKGDVQVQAGIMKIKVNIKDLRKTKETKIEKRQRKKKQMSLNLKSVATSVDLRGMDSEEATYTADKYLDDACMSGLSEVTIIHGKGTGVLRTAINDMLKRHPHVKSYRLGNYGEGGNGVTVVELK.

332–339 (GPNTGGKT) lines the ATP pocket. The 76-residue stretch at 710 to 785 (VDLRGMDSEE…GNGVTVVELK (76 aa)) folds into the Smr domain.

This sequence belongs to the DNA mismatch repair MutS family. MutS2 subfamily. In terms of assembly, homodimer. Binds to stalled ribosomes, contacting rRNA.

Its function is as follows. Endonuclease that is involved in the suppression of homologous recombination and thus may have a key role in the control of bacterial genetic diversity. In terms of biological role, acts as a ribosome collision sensor, splitting the ribosome into its 2 subunits. Detects stalled/collided 70S ribosomes which it binds and splits by an ATP-hydrolysis driven conformational change. Acts upstream of the ribosome quality control system (RQC), a ribosome-associated complex that mediates the extraction of incompletely synthesized nascent chains from stalled ribosomes and their subsequent degradation. Probably generates substrates for RQC. The protein is Endonuclease MutS2 of Clostridium novyi (strain NT).